Reading from the N-terminus, the 861-residue chain is ToMV resistance protein Tm-2(2) (861 aa).

Residues 63–83 (VKNLLKDIQELAGDVEDLLDD) are a coiled coil. Residues 162–388 (DDFNMLQAKL…LESMGHKVQD (227 aa)) form the NB-ARC domain. Residue 185–192 (GMPGLGKT) participates in ATP binding. 13 LRR repeats span residues 225–248 (LDIA…NLRS), 305–327 (LHAL…IFNF), 388–411 (DGCA…CFLY), 449–472 (LAED…TYNG), 510–536 (VARL…KLEK), 585–608 (MTCL…IVKL), 609–631 (TRLE…VWES), 652–680 (ISSF…FFEP), 689–710 (LRKL…IFSP), 712–735 (LKAL…LSSY), 736–758 (PHIA…SFPP), 784–810 (LRKL…GYSF), and 811–835 (PQLE…DVSM).

Belongs to the disease resistance NB-LRR family. In terms of assembly, (Microbial infection) Interacts with tobamoviruses mouvement protein (e.g. tobacco mosaic virus (TMV) MP, AC P03583) at the plasma membrane; this interaction triggers defense responses leading to programmed cell death. As to quaternary structure, binds to HSP90 proteins (e.g. HSP90-1 and Nicotiana benthamiana HSP90-1); this interaction seems required for defense responses toward tobamoviruses.

The protein localises to the cell membrane. In terms of biological role, inhibitor of viral mouvements which confers resistance to some tobamoviruses including tomato mosaic virus (ToMV) (e.g. strains L, B7 and ToMV1-2) and tobacco mosaic virus (TMV), but not to resistance-breaking isolates (e.g. LIIA and ToMV2(2)) ToMV and tomato brown rugose fruit virus (ToBRFV). Elicits a hypersensitive reaction in response to avirulent (Avr) movement proteins from resistance inducing tobamoviruses (e.g. ToMV and TMV) strains, thus leading to programmed cell death; this local extreme resistance requires rbcS. The protein is ToMV resistance protein Tm-2(2) of Solanum lycopersicum (Tomato).